A 668-amino-acid polypeptide reads, in one-letter code: Bifunctional polymyxin resistance protein ArnA (668 aa).

Positions 1 to 307 (MSAKTVVFAY…ELGLVDGSLL (307 aa)) are formyltransferase ArnAFT. Catalysis depends on His-106, which acts as the Proton donor; for formyltransferase activity. Residues Arg-116 and 138–142 (VKRAD) contribute to the (6R)-10-formyltetrahydrofolate site. The segment at 317 to 668 (RRTRVLILGV…IERPSNKEAC (352 aa)) is dehydrogenase ArnADH. Residues Asp-350 and 371–372 (DI) contribute to the NAD(+) site. UDP-alpha-D-glucuronate is bound by residues Ala-396, Tyr-401, and 435–436 (TS). Residue Glu-437 is the Proton acceptor; for decarboxylase activity of the active site. UDP-alpha-D-glucuronate contacts are provided by residues Arg-463, Asn-494, 528-537 (RLFDGGEQKR), and Tyr-615. Arg-621 (proton donor; for decarboxylase activity) is an active-site residue.

The protein in the N-terminal section; belongs to the Fmt family. UDP-L-Ara4N formyltransferase subfamily. In the C-terminal section; belongs to the NAD(P)-dependent epimerase/dehydratase family. UDP-glucuronic acid decarboxylase subfamily. In terms of assembly, homohexamer, formed by a dimer of trimers.

The catalysed reaction is UDP-alpha-D-glucuronate + NAD(+) = UDP-beta-L-threo-pentopyranos-4-ulose + CO2 + NADH. It carries out the reaction UDP-4-amino-4-deoxy-beta-L-arabinose + (6R)-10-formyltetrahydrofolate = UDP-4-deoxy-4-formamido-beta-L-arabinose + (6S)-5,6,7,8-tetrahydrofolate + H(+). It functions in the pathway nucleotide-sugar biosynthesis; UDP-4-deoxy-4-formamido-beta-L-arabinose biosynthesis; UDP-4-deoxy-4-formamido-beta-L-arabinose from UDP-alpha-D-glucuronate: step 1/3. Its pathway is nucleotide-sugar biosynthesis; UDP-4-deoxy-4-formamido-beta-L-arabinose biosynthesis; UDP-4-deoxy-4-formamido-beta-L-arabinose from UDP-alpha-D-glucuronate: step 3/3. It participates in bacterial outer membrane biogenesis; lipopolysaccharide biosynthesis. Functionally, bifunctional enzyme that catalyzes the oxidative decarboxylation of UDP-glucuronic acid (UDP-GlcUA) to UDP-4-keto-arabinose (UDP-Ara4O) and the addition of a formyl group to UDP-4-amino-4-deoxy-L-arabinose (UDP-L-Ara4N) to form UDP-L-4-formamido-arabinose (UDP-L-Ara4FN). The modified arabinose is attached to lipid A and is required for resistance to polymyxin and cationic antimicrobial peptides. The chain is Bifunctional polymyxin resistance protein ArnA from Pseudomonas fluorescens (strain Pf0-1).